Here is a 131-residue protein sequence, read N- to C-terminus: Large ribosomal subunit protein eL32 (131 aa).

This sequence belongs to the eukaryotic ribosomal protein eL32 family. Component of the large ribosomal subunit (LSU). Mature N.crassa ribosomes consist of a small (40S) and a large (60S) subunit. The 40S small subunit contains 1 molecule of ribosomal RNA (18S rRNA) and at least 32 different proteins. The large 60S subunit contains 3 rRNA molecules (26S, 5.8S and 5S rRNA) and at least 42 different proteins.

It is found in the cytoplasm. Component of the ribosome, a large ribonucleoprotein complex responsible for the synthesis of proteins in the cell. The small ribosomal subunit (SSU) binds messenger RNAs (mRNAs) and translates the encoded message by selecting cognate aminoacyl-transfer RNA (tRNA) molecules. The large subunit (LSU) contains the ribosomal catalytic site termed the peptidyl transferase center (PTC), which catalyzes the formation of peptide bonds, thereby polymerizing the amino acids delivered by tRNAs into a polypeptide chain. The nascent polypeptides leave the ribosome through a tunnel in the LSU and interact with protein factors that function in enzymatic processing, targeting, and the membrane insertion of nascent chains at the exit of the ribosomal tunnel. The sequence is that of Large ribosomal subunit protein eL32 (crp-63) from Neurospora crassa (strain ATCC 24698 / 74-OR23-1A / CBS 708.71 / DSM 1257 / FGSC 987).